A 458-amino-acid polypeptide reads, in one-letter code: Exodeoxyribonuclease 7 large subunit (458 aa).

The protein belongs to the XseA family. As to quaternary structure, heterooligomer composed of large and small subunits.

Its subcellular location is the cytoplasm. The enzyme catalyses Exonucleolytic cleavage in either 5'- to 3'- or 3'- to 5'-direction to yield nucleoside 5'-phosphates.. Its function is as follows. Bidirectionally degrades single-stranded DNA into large acid-insoluble oligonucleotides, which are then degraded further into small acid-soluble oligonucleotides. In Yersinia pseudotuberculosis serotype O:1b (strain IP 31758), this protein is Exodeoxyribonuclease 7 large subunit.